Reading from the N-terminus, the 306-residue chain is Phosphatidate cytidylyltransferase (306 aa).

The tract at residues 1–28 (MTTNDAGTGNPAEQPARGAKQQPATETS) is disordered. Helical transmembrane passes span 36 to 56 (AAIV…VFVP), 82 to 102 (GYLI…WLTW), 103 to 123 (PFGA…CMIW), 151 to 171 (ATVF…MLVY), 180 to 200 (FCMM…GVLF), 218 to 238 (FAGS…FLVG), 241 to 261 (PWIG…GDLV), and 285 to 305 (MDRL…LTLL).

The protein belongs to the CDS family.

The protein resides in the cell membrane. It catalyses the reaction a 1,2-diacyl-sn-glycero-3-phosphate + CTP + H(+) = a CDP-1,2-diacyl-sn-glycerol + diphosphate. Its pathway is phospholipid metabolism; CDP-diacylglycerol biosynthesis; CDP-diacylglycerol from sn-glycerol 3-phosphate: step 3/3. In Mycobacterium bovis (strain ATCC BAA-935 / AF2122/97), this protein is Phosphatidate cytidylyltransferase (cdsA).